Reading from the N-terminus, the 256-residue chain is uncharacterized protein (256 aa).

The next 7 helical transmembrane spans lie at 32 to 52, 59 to 79, 112 to 132, 156 to 176, 184 to 204, 207 to 227, and 230 to 250; these read ILAS…GSYF, FAFP…AYGG, YAGN…TGLF, LFFR…IPMS, LFTM…HSIA, CTFA…MGAV, and LIPV…WMYY.

The protein belongs to the FNT transporter (TC 1.A.16) family.

It is found in the cell membrane. This is an uncharacterized protein from Bacillus subtilis (strain 168).